A 187-amino-acid chain; its full sequence is GTP cyclohydrolase 1 (187 aa).

Zn(2+) is bound by residues C76, H79, and C148.

The protein belongs to the GTP cyclohydrolase I family. As to quaternary structure, toroid-shaped homodecamer, composed of two pentamers of five dimers.

The catalysed reaction is GTP + H2O = 7,8-dihydroneopterin 3'-triphosphate + formate + H(+). It participates in cofactor biosynthesis; 7,8-dihydroneopterin triphosphate biosynthesis; 7,8-dihydroneopterin triphosphate from GTP: step 1/1. This is GTP cyclohydrolase 1 from Streptococcus suis (strain 98HAH33).